Consider the following 403-residue polypeptide: Aloesone synthase (403 aa).

C174 is a catalytic residue. Residues S281 and G318–A321 contribute to the CoA site.

Belongs to the thiolase-like superfamily. Chalcone/stilbene synthases family. Homodimer.

The protein operates within secondary metabolite biosynthesis; flavonoid biosynthesis. Functionally, catalyzes the iterative condensations of 6, 7 or 8 molecules of malonyl-CoA to produce various aromatic polyketides. Produces the heptaketide aloesone, the aglycone of aloesin, from 7 molecules of malonyl-CoA as a major product. Also able to produce a hexaketide pyrone, a heptaketide 6-(2-acetyl-3,5-dihydroxybenzyl)-4-hydroxy-2-pyrone, a novel heptaketide 6-(2-(2,4-dihydroxy-6-methylphenyl)-2-oxoethyl)-4-hydroxy-2-pyrone and octaketides SEK4/SEK4b. The sequence is that of Aloesone synthase (PKS3) from Aloe arborescens (Kidachi aloe).